We begin with the raw amino-acid sequence, 430 residues long: Sphingosine-1-phosphate phosphatase 1 (430 aa).

The tract at residues 34–100 (GSPKAGEDAE…PRRAGSLRRN (67 aa)) is disordered. Ser101 bears the Phosphoserine mark. The residue at position 103 (Thr103) is a Phosphothreonine. 4 helical membrane-spanning segments follow: residues 121-141 (FCFG…PFWI), 152-172 (LVII…IIRW), 193-213 (MPST…LLTY), and 216-236 (WQYP…LVCL). The tract at residues 167 to 175 (KDIIRWPRP) is phosphatase sequence motif I. Residues 194–197 (PSTH) are phosphatase sequence motif II. Catalysis depends on His197, which acts as the Proton donor. The tract at residues 237–248 (SRIYMGMHSILD) is phosphatase sequence motif III. His244 serves as the catalytic Nucleophile. The next 5 helical transmembrane spans lie at 246 to 266 (ILDV…FYPL), 279 to 299 (YAPL…FTLD), 311 to 331 (ILGS…LGIS), 348 to 368 (VTLF…VLFV), and 409 to 429 (YGTV…FIGI).

It belongs to the type 2 lipid phosphate phosphatase family.

The protein resides in the endoplasmic reticulum membrane. The protein localises to the cell membrane. It carries out the reaction sphinganine 1-phosphate + H2O = sphinganine + phosphate. The catalysed reaction is sphing-4-enine 1-phosphate + H2O = sphing-4-enine + phosphate. Specifically dephosphorylates sphingosine 1-phosphate (S1P), dihydro-S1P, and phyto-S1P. Does not act on ceramide 1-phosphate, lysophosphatidic acid or phosphatidic acid. Sphingosine-1-phosphate phosphatase activity is needed for efficient recycling of sphingosine into the sphingolipid synthesis pathway. Regulates the intracellular levels of the bioactive sphingolipid metabolite S1P that regulates diverse biological processes acting both as an extracellular receptor ligand or as an intracellular second messenger. Involved in efficient ceramide synthesis from exogenous sphingoid bases. Converts S1P to sphingosine, which is readily metabolized to ceramide via ceramide synthase. In concert with sphingosine kinase 2 (SphK2), recycles sphingosine into ceramide through a phosphorylation/dephosphorylation cycle. Regulates endoplasmic-to-Golgi trafficking of ceramides, resulting in the regulation of ceramide levels in the endoplasmic reticulum, preferentially long-chain ceramide species, and influences the anterograde membrane transport of both ceramide and proteins from the endoplasmic reticulum to the Golgi apparatus. The modulation of intracellular ceramide levels in turn regulates apoptosis. Via S1P levels, modulates resting tone, intracellular Ca(2+) and myogenic vasoconstriction in resistance arteries. Also involved in unfolded protein response (UPR) and ER stress-induced autophagy via regulation of intracellular S1P levels. Involved in the regulation of epidermal homeostasis and keratinocyte differentiation. This is Sphingosine-1-phosphate phosphatase 1 from Rattus norvegicus (Rat).